We begin with the raw amino-acid sequence, 130 residues long: Small ribosomal subunit protein uS11 (130 aa).

Belongs to the universal ribosomal protein uS11 family. Part of the 30S ribosomal subunit. Interacts with proteins S7 and S18. Binds to IF-3.

In terms of biological role, located on the platform of the 30S subunit, it bridges several disparate RNA helices of the 16S rRNA. Forms part of the Shine-Dalgarno cleft in the 70S ribosome. This chain is Small ribosomal subunit protein uS11, found in Microcystis aeruginosa (strain NIES-843 / IAM M-2473).